We begin with the raw amino-acid sequence, 195 residues long: Thymidine kinase (195 aa).

ATP is bound by residues 15–22 (GSMFSGKS) and 88–91 (DEVQ). The active-site Proton acceptor is Glu-89. Residues Cys-145, Cys-148, Cys-183, and Cys-186 each coordinate Zn(2+).

This sequence belongs to the thymidine kinase family. Homotetramer.

It is found in the cytoplasm. It catalyses the reaction thymidine + ATP = dTMP + ADP + H(+). The sequence is that of Thymidine kinase from Bacillus cereus (strain AH187).